Here is a 195-residue protein sequence, read N- to C-terminus: Probable GTP-binding protein EngB (195 aa).

The EngB-type G domain occupies 24-195; sequence GLTEVALSGR…EIWNFIETYI (172 aa). Residues 32-39, 59-63, 77-80, 144-147, and 176-178 each bind GTP; these read GRSNVGKS, GKTQT, DVPG, TKED, and YSS. The Mg(2+) site is built by S39 and T61.

It belongs to the TRAFAC class TrmE-Era-EngA-EngB-Septin-like GTPase superfamily. EngB GTPase family. It depends on Mg(2+) as a cofactor.

Necessary for normal cell division and for the maintenance of normal septation. The sequence is that of Probable GTP-binding protein EngB from Staphylococcus epidermidis (strain ATCC 35984 / DSM 28319 / BCRC 17069 / CCUG 31568 / BM 3577 / RP62A).